The sequence spans 111 residues: Small ribosomal subunit protein bS16 (111 aa).

Belongs to the bacterial ribosomal protein bS16 family.

This Rickettsia bellii (strain OSU 85-389) protein is Small ribosomal subunit protein bS16.